The chain runs to 366 residues: MSMNSSKQPVSPAAGLIANTTCQTENRLSVFFSIIFMTVGILSNSLAIAILMKAYQRFRQKSKASFLLLASGLVITDFFGHLINGGIAVFVYASDKDWIRFDQSNILCSIFGISMVFSGLCPLFLGSAMAIERCIGVTNPIFHSTKITSKHVKMILSGVCMFAVFVAVLPILGHRDYQIQASRTWCFYNTEHIEDWEDRFYLLFFSFLGLLALGVSFSCNAVTGVTLLRVKFRSQQHRQGRSHHLEMIIQLLAIMCVSCVCWSPFLVTMANIAINGNNSPVTCETTLFALRMATWNQILDPWVYILLRKAVLRNLYKLASRCCGVNIISLHIWELSSIKNSLKVAAISESPAAEKESQQASSEAGL.

Topologically, residues 1 to 31 (MSMNSSKQPVSPAAGLIANTTCQTENRLSVF) are extracellular. Asn-4 and Asn-19 each carry an N-linked (GlcNAc...) asparagine glycan. The chain crosses the membrane as a helical span at residues 32 to 55 (FSIIFMTVGILSNSLAIAILMKAY). Over 56–69 (QRFRQKSKASFLLL) the chain is Cytoplasmic. Residues 70-90 (ASGLVITDFFGHLINGGIAVF) form a helical membrane-spanning segment. At 91-109 (VYASDKDWIRFDQSNILCS) the chain is on the extracellular side. The cysteines at positions 108 and 186 are disulfide-linked. The helical transmembrane segment at 110–131 (IFGISMVFSGLCPLFLGSAMAI) threads the bilayer. The Cytoplasmic portion of the chain corresponds to 132-152 (ERCIGVTNPIFHSTKITSKHV). A helical transmembrane segment spans residues 153-175 (KMILSGVCMFAVFVAVLPILGHR). The Extracellular segment spans residues 176–198 (DYQIQASRTWCFYNTEHIEDWED). Residues 199–224 (RFYLLFFSFLGLLALGVSFSCNAVTG) form a helical membrane-spanning segment. Residues 225–250 (VTLLRVKFRSQQHRQGRSHHLEMIIQ) lie on the Cytoplasmic side of the membrane. Residues 251–267 (LLAIMCVSCVCWSPFLV) traverse the membrane as a helical segment. The Extracellular segment spans residues 268–285 (TMANIAINGNNSPVTCET). Residues 286–307 (TLFALRMATWNQILDPWVYILL) form a helical membrane-spanning segment. The Cytoplasmic portion of the chain corresponds to 308 to 366 (RKAVLRNLYKLASRCCGVNIISLHIWELSSIKNSLKVAAISESPAAEKESQQASSEAGL).

It belongs to the G-protein coupled receptor 1 family.

It localises to the cell membrane. In terms of biological role, receptor for prostaglandin F2-alpha (PGF2-alpha). The activity of this receptor is mediated by G proteins which activate a phosphatidylinositol-calcium second messenger system. Initiates luteolysis in the corpus luteum. The sequence is that of Prostaglandin F2-alpha receptor (Ptgfr) from Mus musculus (Mouse).